The chain runs to 245 residues: Zinc finger CCCH domain-containing protein 54 (245 aa).

The segment at 92–119 adopts a C3H1-type zinc-finger fold; the sequence is TYCAVACPAFRNGACHRGDSCEFAHGVF. A disordered region spans residues 175–204; that stretch reads GNGDGVTMRMDDEGYDTSRSPVRSGKDDLD.

Interacts with MARD1/FLZ9 and RD21A. Specifically expressed in embryo (at protein level).

The protein resides in the nucleus. Embryo-specific transcription factor required at the globular to heart stage transition in embryo development. The protein is Zinc finger CCCH domain-containing protein 54 of Arabidopsis thaliana (Mouse-ear cress).